We begin with the raw amino-acid sequence, 331 residues long: GTP 3',8-cyclase (331 aa).

One can recognise a Radical SAM core domain in the interval 1–231 (MNAVDYLRIS…DGQVQGNGPA (231 aa)). Arg-8 lines the GTP pocket. [4Fe-4S] cluster is bound by residues Cys-15 and Cys-19. S-adenosyl-L-methionine is bound at residue Tyr-21. A [4Fe-4S] cluster-binding site is contributed by Cys-22. Residue Arg-60 participates in GTP binding. Gly-64 serves as a coordination point for S-adenosyl-L-methionine. Thr-91 is a binding site for GTP. Ser-115 is a binding site for S-adenosyl-L-methionine. A GTP-binding site is contributed by Lys-157. Residue Met-191 coordinates S-adenosyl-L-methionine. [4Fe-4S] cluster-binding residues include Cys-254 and Cys-257. GTP is bound at residue 259–261 (RMR). Cys-271 is a [4Fe-4S] cluster binding site.

Belongs to the radical SAM superfamily. MoaA family. As to quaternary structure, monomer and homodimer. [4Fe-4S] cluster serves as cofactor.

The catalysed reaction is GTP + AH2 + S-adenosyl-L-methionine = (8S)-3',8-cyclo-7,8-dihydroguanosine 5'-triphosphate + 5'-deoxyadenosine + L-methionine + A + H(+). It functions in the pathway cofactor biosynthesis; molybdopterin biosynthesis. Catalyzes the cyclization of GTP to (8S)-3',8-cyclo-7,8-dihydroguanosine 5'-triphosphate. This chain is GTP 3',8-cyclase, found in Acaryochloris marina (strain MBIC 11017).